Reading from the N-terminus, the 456-residue chain is Bifunctional protein GlmU (456 aa).

The tract at residues 1–228 is pyrophosphorylase; it reads MPQNTLNIVI…SHLAAGVNNK (228 aa). UDP-N-acetyl-alpha-D-glucosamine is bound by residues 11–14, Lys-25, Gln-75, 80–81, 102–104, Gly-138, Glu-153, Asn-168, and Asn-226; these read LAAG, GT, and YGD. Residue Asp-104 participates in Mg(2+) binding. Asn-226 is a Mg(2+) binding site. The linker stretch occupies residues 229 to 249; the sequence is LQLAELERIFQTGQAQELLKA. The N-acetyltransferase stretch occupies residues 250-456; sequence GVTLHDPARF…GWVRPEKDKQ (207 aa). UDP-N-acetyl-alpha-D-glucosamine is bound by residues Arg-332 and Lys-350. The active-site Proton acceptor is His-362. UDP-N-acetyl-alpha-D-glucosamine is bound by residues Tyr-365 and Asn-376. Acetyl-CoA contacts are provided by residues Ala-379, 385–386, Ser-404, Ala-422, and Arg-439; that span reads NY.

In the N-terminal section; belongs to the N-acetylglucosamine-1-phosphate uridyltransferase family. The protein in the C-terminal section; belongs to the transferase hexapeptide repeat family. As to quaternary structure, homotrimer. Mg(2+) serves as cofactor.

It localises to the cytoplasm. The catalysed reaction is alpha-D-glucosamine 1-phosphate + acetyl-CoA = N-acetyl-alpha-D-glucosamine 1-phosphate + CoA + H(+). It catalyses the reaction N-acetyl-alpha-D-glucosamine 1-phosphate + UTP + H(+) = UDP-N-acetyl-alpha-D-glucosamine + diphosphate. The protein operates within nucleotide-sugar biosynthesis; UDP-N-acetyl-alpha-D-glucosamine biosynthesis; N-acetyl-alpha-D-glucosamine 1-phosphate from alpha-D-glucosamine 6-phosphate (route II): step 2/2. Its pathway is nucleotide-sugar biosynthesis; UDP-N-acetyl-alpha-D-glucosamine biosynthesis; UDP-N-acetyl-alpha-D-glucosamine from N-acetyl-alpha-D-glucosamine 1-phosphate: step 1/1. It functions in the pathway bacterial outer membrane biogenesis; LPS lipid A biosynthesis. Catalyzes the last two sequential reactions in the de novo biosynthetic pathway for UDP-N-acetylglucosamine (UDP-GlcNAc). The C-terminal domain catalyzes the transfer of acetyl group from acetyl coenzyme A to glucosamine-1-phosphate (GlcN-1-P) to produce N-acetylglucosamine-1-phosphate (GlcNAc-1-P), which is converted into UDP-GlcNAc by the transfer of uridine 5-monophosphate (from uridine 5-triphosphate), a reaction catalyzed by the N-terminal domain. This Neisseria meningitidis serogroup C (strain 053442) protein is Bifunctional protein GlmU.